We begin with the raw amino-acid sequence, 254 residues long: Probable phosphatase Shew185_1467 (254 aa).

Zn(2+)-binding residues include His8, His10, His16, His41, Glu74, His102, His132, Asp193, and His195.

The protein belongs to the PHP family. Zn(2+) serves as cofactor.

The polypeptide is Probable phosphatase Shew185_1467 (Shewanella baltica (strain OS185)).